The chain runs to 454 residues: Phosphoglucosamine mutase (454 aa).

The active-site Phosphoserine intermediate is S101. Positions 101, 243, 245, and 247 each coordinate Mg(2+). S101 bears the Phosphoserine mark.

Belongs to the phosphohexose mutase family. Mg(2+) serves as cofactor. Activated by phosphorylation.

The enzyme catalyses alpha-D-glucosamine 1-phosphate = D-glucosamine 6-phosphate. In terms of biological role, catalyzes the conversion of glucosamine-6-phosphate to glucosamine-1-phosphate. The polypeptide is Phosphoglucosamine mutase (Citrifermentans bemidjiense (strain ATCC BAA-1014 / DSM 16622 / JCM 12645 / Bem) (Geobacter bemidjiensis)).